Reading from the N-terminus, the 201-residue chain is FMN-dependent NADH:quinone oxidoreductase (201 aa).

FMN-binding positions include serine 10, 16-18, 96-99, and 140-143; these read SQS, MYNF, and SRGG.

This sequence belongs to the azoreductase type 1 family. Homodimer. FMN serves as cofactor.

It catalyses the reaction 2 a quinone + NADH + H(+) = 2 a 1,4-benzosemiquinone + NAD(+). The enzyme catalyses N,N-dimethyl-1,4-phenylenediamine + anthranilate + 2 NAD(+) = 2-(4-dimethylaminophenyl)diazenylbenzoate + 2 NADH + 2 H(+). In terms of biological role, quinone reductase that provides resistance to thiol-specific stress caused by electrophilic quinones. Functionally, also exhibits azoreductase activity. Catalyzes the reductive cleavage of the azo bond in aromatic azo compounds to the corresponding amines. The polypeptide is FMN-dependent NADH:quinone oxidoreductase (Yersinia pseudotuberculosis serotype O:1b (strain IP 31758)).